We begin with the raw amino-acid sequence, 562 residues long: Tissue-type plasminogen activator (562 aa).

The first 20 residues, 1–20, serve as a signal peptide directing secretion; sequence MNAMKRGLCCVLLLCGAVFA. Residues 21–32 constitute a propeptide that is removed on maturation; the sequence is LPSQEIHARVRR. Positions 33–35 are cleaved as a propeptide — removed by plasmin; that stretch reads GAR. The region spanning 39-81 is the Fibronectin type-I domain; that stretch reads VICRDEKTQMIYQQHQSWLRPVLRSNRVEYCWCNSGRAQCHSV. 17 disulfide bridges follow: cysteine 41/cysteine 71, cysteine 69/cysteine 78, cysteine 86/cysteine 97, cysteine 91/cysteine 108, cysteine 110/cysteine 119, cysteine 127/cysteine 208, cysteine 148/cysteine 190, cysteine 179/cysteine 203, cysteine 215/cysteine 296, cysteine 236/cysteine 278, cysteine 267/cysteine 291, cysteine 299/cysteine 430, cysteine 342/cysteine 358, cysteine 350/cysteine 419, cysteine 444/cysteine 519, cysteine 476/cysteine 492, and cysteine 509/cysteine 537. The important for binding to annexin A2 stretch occupies residues 42 to 52; sequence RDEKTQMIYQQ. The EGF-like domain maps to 82–120; it reads PVRSCSEPRCFNGGTCQQALYFSDFVCQCPEGFAGKCCE. Threonine 96 carries O-linked (Fuc) threonine glycosylation. 2 Kringle domains span residues 126-208 and 214-296; these read TCYE…TPAC and DCYF…VPSC. Residue asparagine 152 is glycosylated (N-linked (GlcNAc...) asparagine). Residues 311–561 form the Peptidase S1 domain; the sequence is IKGGLFADIA…YLDWIHDNMR (251 aa). Catalysis depends on charge relay system residues histidine 357 and aspartate 406. Asparagine 483 carries an N-linked (GlcNAc...) asparagine glycan. Serine 513 (charge relay system) is an active-site residue.

It belongs to the peptidase S1 family. As to quaternary structure, heterodimer of chain A and chain B held by a disulfide bond. Binds to fibrin with high affinity. This interaction leads to an increase in the catalytic efficiency of the enzyme due to an increase in affinity for plasminogen. Similarly, binding to heparin increases the activation of plasminogen. Binds to annexin A2, cytokeratin-8, fibronectin and laminin. Binds to mannose receptor and the low-density lipoprotein receptor-related protein (LRP1); these proteins are involved in TPA clearance. Binds LRP1B; binding is followed by internalization and degradation. Forms heterodimer with SERPINA5. Interacts with SERPINE1. In complex with SERPINE1, interacts with SORL1. The single chain, almost fully active enzyme, can be further processed into a two-chain fully active form by a cleavage after Arg-310 catalyzed by plasmin, tissue kallikrein or factor Xa.

The protein localises to the secreted. It is found in the extracellular space. The enzyme catalyses Specific cleavage of Arg-|-Val bond in plasminogen to form plasmin.. Inhibited by SERPINA5. Inhibited by SERPINE1. Converts the abundant, but inactive, zymogen plasminogen to plasmin by hydrolyzing a single Arg-Val bond in plasminogen. By controlling plasmin-mediated proteolysis, it plays an important role in tissue remodeling and degradation, in cell migration and many other physiopathological events. During oocyte activation, plays a role in cortical granule reaction in the zona reaction, which contributes to the block to polyspermy. In Pongo abelii (Sumatran orangutan), this protein is Tissue-type plasminogen activator (PLAT).